Here is a 359-residue protein sequence, read N- to C-terminus: Type-1 angiotensin II receptor (359 aa).

Residues 1 to 25 (MVPNYSTEETVKRIHVDCPVSGRHS) are Extracellular-facing. Asn4 carries an N-linked (GlcNAc...) asparagine glycan. Asp17 is a binding site for angiotensin II. 2 disulfides stabilise this stretch: Cys18-Cys274 and Cys101-Cys180. A helical membrane pass occupies residues 26 to 55 (YIYIMVPTVYSIIFIIGIFGNSLVVIVIYC). The Cytoplasmic segment spans residues 56–61 (YMKLKT). Residues 62–89 (VASIFLLNLALADLCFLITLPLWAAYTA) form a helical membrane-spanning segment. Topologically, residues 90–98 (MEYQWPFGN) are extracellular. The chain crosses the membrane as a helical span at residues 99–125 (CLCKLASAGISFNLYASVFLLTCLSID). Topologically, residues 126–141 (RYLAIVHPVKSRIRRT) are cytoplasmic. Residues 142–165 (MFVARVTCIVIWLLAGVASLPVII) traverse the membrane as a helical segment. The Extracellular segment spans residues 166-190 (HRNIFFAENLNMTVCGFRYDNNNTT). Arg167 lines the angiotensin II pocket. A glycan (N-linked (GlcNAc...) asparagine) is linked at Asn176. Residues Phe182 and Tyr184 each coordinate angiotensin II. Residues Asn187 and Asn188 are each glycosylated (N-linked (GlcNAc...) asparagine). A helical transmembrane segment spans residues 191 to 216 (LRVGLGLSKNLLGFLIPFLIILTSYT). An angiotensin II-binding site is contributed by Lys199. Over 217–239 (LIWKTLKKAYQIQRNKTRNDDIF) the chain is Cytoplasmic. Residues 240–268 (KMIVAIVFFFFFSWIPHQVFTFLDVLIQL) traverse the membrane as a helical segment. The Extracellular segment spans residues 269-278 (HVITDCKITD). Residues 279–304 (IVDTAMPFTICIAYFNNCLNPFFYVF) traverse the membrane as a helical segment. Topologically, residues 305–359 (FGKNFKKYFLQLIKYIPPNVSTHPSLTTKMSSLSYRPPENIRLPTKKTAGSFDTE) are cytoplasmic.

Belongs to the G-protein coupled receptor 1 family. Post-translationally, C-terminal Ser or Thr residues may be phosphorylated. As to expression, adrenal medulla.

The protein localises to the cell membrane. In terms of biological role, receptor for angiotensin II, a vasoconstricting peptide, which acts as a key regulator of blood pressure and sodium retention by the kidney. The activated receptor in turn couples to G-alpha proteins G(q) (GNAQ, GNA11, GNA14 or GNA15) and thus activates phospholipase C and increases the cytosolic Ca(2+) concentrations, which in turn triggers cellular responses such as stimulation of protein kinase C. The sequence is that of Type-1 angiotensin II receptor (AGTR1) from Meleagris gallopavo (Wild turkey).